Here is a 204-residue protein sequence, read N- to C-terminus: Probable GTP-binding protein EngB (204 aa).

The 175-residue stretch at 27–201 (SGIEIAFAGR…SEKLDQWFSP (175 aa)) folds into the EngB-type G domain. Residues 35-42 (GRSNAGKS), 62-66 (GRTQL), 80-83 (DLPG), 147-150 (TKAD), and 180-182 (FSA) contribute to the GTP site. Ser-42 and Thr-64 together coordinate Mg(2+).

This sequence belongs to the TRAFAC class TrmE-Era-EngA-EngB-Septin-like GTPase superfamily. EngB GTPase family. The cofactor is Mg(2+).

Functionally, necessary for normal cell division and for the maintenance of normal septation. The sequence is that of Probable GTP-binding protein EngB from Histophilus somni (strain 129Pt) (Haemophilus somnus).